The sequence spans 81 residues: Large ribosomal subunit protein bL31 (81 aa).

Zn(2+) is bound by residues Cys-16, Cys-18, Cys-38, and Cys-41.

It belongs to the bacterial ribosomal protein bL31 family. Type A subfamily. As to quaternary structure, part of the 50S ribosomal subunit. It depends on Zn(2+) as a cofactor.

Its function is as follows. Binds the 23S rRNA. This chain is Large ribosomal subunit protein bL31, found in Mycobacterium sp. (strain JLS).